Reading from the N-terminus, the 209-residue chain is Segregation and condensation protein B (209 aa).

Belongs to the ScpB family. Homodimer. Homodimerization may be required to stabilize the binding of ScpA to the Smc head domains. Component of a cohesin-like complex composed of ScpA, ScpB and the Smc homodimer, in which ScpA and ScpB bind to the head domain of Smc. The presence of the three proteins is required for the association of the complex with DNA.

The protein resides in the cytoplasm. In terms of biological role, participates in chromosomal partition during cell division. May act via the formation of a condensin-like complex containing Smc and ScpA that pull DNA away from mid-cell into both cell halves. The protein is Segregation and condensation protein B of Geobacillus thermodenitrificans (strain NG80-2).